A 217-amino-acid polypeptide reads, in one-letter code: High frequency lysogenization protein HflD homolog (217 aa).

This sequence belongs to the HflD family.

The protein localises to the cytoplasm. Its subcellular location is the cell membrane. The polypeptide is High frequency lysogenization protein HflD homolog (Buchnera aphidicola subsp. Baizongia pistaciae (strain Bp)).